Reading from the N-terminus, the 195-residue chain is PABIR family member 1 (195 aa).

This sequence belongs to the FAM122 family.

The polypeptide is PABIR family member 1 (Homo sapiens (Human)).